Here is a 95-residue protein sequence, read N- to C-terminus: Aspartyl/glutamyl-tRNA(Asn/Gln) amidotransferase subunit C (95 aa).

Belongs to the GatC family. As to quaternary structure, heterotrimer of A, B and C subunits.

It carries out the reaction L-glutamyl-tRNA(Gln) + L-glutamine + ATP + H2O = L-glutaminyl-tRNA(Gln) + L-glutamate + ADP + phosphate + H(+). The catalysed reaction is L-aspartyl-tRNA(Asn) + L-glutamine + ATP + H2O = L-asparaginyl-tRNA(Asn) + L-glutamate + ADP + phosphate + 2 H(+). Functionally, allows the formation of correctly charged Asn-tRNA(Asn) or Gln-tRNA(Gln) through the transamidation of misacylated Asp-tRNA(Asn) or Glu-tRNA(Gln) in organisms which lack either or both of asparaginyl-tRNA or glutaminyl-tRNA synthetases. The reaction takes place in the presence of glutamine and ATP through an activated phospho-Asp-tRNA(Asn) or phospho-Glu-tRNA(Gln). The chain is Aspartyl/glutamyl-tRNA(Asn/Gln) amidotransferase subunit C from Cereibacter sphaeroides (strain ATCC 17025 / ATH 2.4.3) (Rhodobacter sphaeroides).